The chain runs to 561 residues: Urocanate hydratase (561 aa).

Residues 52–53, Gln130, 176–178, Glu196, Arg201, 242–243, 263–267, 273–274, and Tyr322 each bind NAD(+); these read GG, GMG, NA, QTSAH, and YL. Cys410 is an active-site residue. Gly492 is a binding site for NAD(+).

It belongs to the urocanase family. NAD(+) is required as a cofactor.

Its subcellular location is the cytoplasm. The catalysed reaction is 4-imidazolone-5-propanoate = trans-urocanate + H2O. It functions in the pathway amino-acid degradation; L-histidine degradation into L-glutamate; N-formimidoyl-L-glutamate from L-histidine: step 2/3. In terms of biological role, catalyzes the conversion of urocanate to 4-imidazolone-5-propionate. In Salmonella newport (strain SL254), this protein is Urocanate hydratase.